Here is a 169-residue protein sequence, read N- to C-terminus: uncharacterized protein (169 aa).

The next 3 membrane-spanning stretches (helical) occupy residues 25–45, 57–77, and 91–111; these read ALMG…MSYF, FFWV…FGVF, and LFLI…FLMV.

The protein belongs to the major facilitator superfamily. Allantoate permease family.

Its subcellular location is the membrane. This is an uncharacterized protein from Saccharomyces cerevisiae (strain ATCC 204508 / S288c) (Baker's yeast).